Here is a 340-residue protein sequence, read N- to C-terminus: Protein-lysine N-methyltransferase EEF2KMT (340 aa).

The residue at position 1 (Met-1) is an N-acetylmethionine. Residues Trp-139, 165 to 167 (GSG), Trp-238, and Ala-257 each bind S-adenosyl-L-methionine.

Belongs to the class I-like SAM-binding methyltransferase superfamily. EEF2KMT family. In terms of assembly, interacts with FAM86B2 and FAM86C1P.

It is found in the cytoplasm. The catalysed reaction is L-lysyl-[protein] + 3 S-adenosyl-L-methionine = N(6),N(6),N(6)-trimethyl-L-lysyl-[protein] + 3 S-adenosyl-L-homocysteine + 3 H(+). In terms of biological role, catalyzes the trimethylation of eukaryotic elongation factor 2 (EEF2) on 'Lys-525'. The sequence is that of Protein-lysine N-methyltransferase EEF2KMT (EEF2KMT) from Bos taurus (Bovine).